The following is a 761-amino-acid chain: Nitrogen fixation protein FixI (761 aa).

The Cytoplasmic portion of the chain corresponds to 1-120 (MSCCTMDAES…SAPESDKTRN (120 aa)). The region spanning 36–106 (RQLDLSVSDV…EINSAGYRAH (71 aa)) is the HMA domain. Residues Cys47 and Cys50 each coordinate a metal cation. The chain crosses the membrane as a helical span at residues 121 to 142 (QLLLAIGVSGFAAPNIMLLSVS). Over 143–155 (VWSGADAATRDMF) the chain is Extracellular. The chain crosses the membrane as a helical span at residues 156–177 (HWISAMIAAPALVYAGRFFFKS). The Cytoplasmic portion of the chain corresponds to 178–184 (AWNALRH). Residues 185–205 (GRTNMDVPISVTVSLSYAVSL) form a helical membrane-spanning segment. At 206–217 (WETVHHGEHAWF) the chain is on the extracellular side. The chain crosses the membrane as a helical span at residues 218-238 (DASVSLLFFLLIGRTLDHIMR). Residues 239 to 367 (EKARAAINGL…RARYRRIADR (129 aa)) lie on the Cytoplasmic side of the membrane. The helical transmembrane segment at 368–390 (AATLYSPVVHLLALVSFLAWGFL) threads the bilayer. Over 391–395 (GGDWK) the chain is Extracellular. Residues 396–415 (QAMLVAVAVLIITCPCALGL) form a helical membrane-spanning segment. Topologically, residues 416 to 691 (AVPVVQVVAA…AVARRSASLI (276 aa)) are cytoplasmic. Asp453 functions as the 4-aspartylphosphate intermediate in the catalytic mechanism. Mg(2+)-binding residues include Asp637 and Asp641. Residues 692–711 (RQNFALAIGYNVLAVPIAIA) traverse the membrane as a helical segment. Residues 712–716 (GLATP) are Extracellular-facing. The chain crosses the membrane as a helical span at residues 717–735 (LIAAVAMSTSSIIVVTNAL). Residues 736–761 (RLNGFGKRPDMHIRRGIGRSAEVKAA) are Cytoplasmic-facing.

Belongs to the cation transport ATPase (P-type) (TC 3.A.3) family. Type IB subfamily.

The protein resides in the cell membrane. The enzyme catalyses ATP + H2O = ADP + phosphate + H(+). FixI is a pump of a specific cation involved in symbiotic nitrogen fixation. The four proteins FixG, FixH, FixI, and FixS may participate in a membrane-bound complex coupling the FixI cation pump with a redox process catalyzed by FixG. The polypeptide is Nitrogen fixation protein FixI (fixI) (Rhizobium leguminosarum bv. viciae).